We begin with the raw amino-acid sequence, 321 residues long: Pheromone-regulated membrane protein 5 (321 aa).

The disordered stretch occupies residues 35–59 (SSSSSSSSLPLLSNSTSSSIIPSIT). The helical transmembrane segment at 81–101 (FIIVGGIAGVIFLAILLWWVI) threads the bilayer. At Ser132 the chain carries Phosphoserine. Low complexity predominate over residues 241–250 (TISSSSASSL). Residues 241–321 (TISSSSASSL…HMLEGKEQDE (81 aa)) form a disordered region. A compositionally biased stretch (basic and acidic residues) spans 253–264 (GNEKEVGEDIRK). Residues 279-288 (SPESDGSVNR) show a composition bias toward polar residues. Phosphoserine is present on residues Ser282, Ser285, and Ser291. The span at 312–321 (HMLEGKEQDE) shows a compositional bias: basic and acidic residues. Residue Lys317 forms a Glycyl lysine isopeptide (Lys-Gly) (interchain with G-Cter in ubiquitin) linkage.

It belongs to the PRM5 family.

The protein resides in the membrane. This Saccharomyces cerevisiae (strain YJM789) (Baker's yeast) protein is Pheromone-regulated membrane protein 5 (PRM5).